We begin with the raw amino-acid sequence, 221 residues long: UPF0758 protein YicR (221 aa).

Residues 99-221 (ALLSPEMTRE…YVSFAERGWI (123 aa)) enclose the MPN domain. Zn(2+)-binding residues include histidine 170, histidine 172, and aspartate 183. Residues 170-183 (HNHPSGCAEPSKAD) carry the JAMM motif motif.

The protein belongs to the UPF0758 family. YicR subfamily.

The sequence is that of UPF0758 protein YicR from Salmonella agona (strain SL483).